We begin with the raw amino-acid sequence, 45 residues long: Pyruvate dehydrogenase E1 component (45 aa).

As to quaternary structure, homodimer. Thiamine diphosphate is required as a cofactor.

The enzyme catalyses N(6)-[(R)-lipoyl]-L-lysyl-[protein] + pyruvate + H(+) = N(6)-[(R)-S(8)-acetyldihydrolipoyl]-L-lysyl-[protein] + CO2. Functionally, the pyruvate dehydrogenase complex catalyzes the overall conversion of pyruvate to acetyl-CoA and CO(2). It contains multiple copies of three enzymatic components: pyruvate dehydrogenase (E1), dihydrolipoamide acetyltransferase (E2) and lipoamide dehydrogenase (E3). In Azotobacter vinelandii, this protein is Pyruvate dehydrogenase E1 component.